Here is a 163-residue protein sequence, read N- to C-terminus: Adenosine 5'-monophosphoramidase HINT2 (163 aa).

The N-terminal 17 residues, 1 to 17 (MAAAVVLAAGLCVARRA), are a transit peptide targeting the mitochondrion. The HIT domain maps to 55 to 163 (IFSRILDRSL…GGRQLQWPPG (109 aa)). AMP is bound by residues Ser63 and Asp80. Lys119 carries the post-translational modification N6-acetyllysine. Asn136 contributes to the AMP binding site. An N6-acetyllysine modification is found at Lys139. AMP is bound by residues 142–145 (AQSV) and 149–151 (HIH). Residues 147–151 (HLHIH) carry the Histidine triad motif motif. Residue His149 is the Tele-AMP-histidine intermediate of the active site.

It belongs to the HINT family.

It is found in the mitochondrion. It catalyses the reaction adenosine 5'-phosphoramidate + H2O = AMP + NH4(+). Exhibits adenosine 5'-monophosphoramidase activity, hydrolyzing purine nucleotide phosphoramidates with a single phosphate group such as adenosine 5'monophosphoramidate (AMP-NH2) to yield AMP and NH2. Hydrolyzes adenosine 5'-O-p-nitrophenylphosphoramidate (AMP-pNA). May be involved in steroid biosynthesis. May play a role in apoptosis. The polypeptide is Adenosine 5'-monophosphoramidase HINT2 (Bos taurus (Bovine)).